A 115-amino-acid polypeptide reads, in one-letter code: MNMALTLFTNTALASLLVLIAFWLPQLNTYSEKASPYECGFDPMGSARLPFSMKFFLVAITFLLFDLEIALLLPLPWASHTDNLTTMLTMALLLISLLAASLAYEWTEKGLEWTE.

3 helical membrane-spanning segments follow: residues 4 to 24 (ALTL…AFWL), 55 to 75 (FFLV…LLPL), and 84 to 104 (LTTM…SLAY).

It belongs to the complex I subunit 3 family. As to quaternary structure, core subunit of respiratory chain NADH dehydrogenase (Complex I) which is composed of 45 different subunits. Interacts with TMEM186. Interacts with TMEM242.

It is found in the mitochondrion inner membrane. It carries out the reaction a ubiquinone + NADH + 5 H(+)(in) = a ubiquinol + NAD(+) + 4 H(+)(out). Functionally, core subunit of the mitochondrial membrane respiratory chain NADH dehydrogenase (Complex I) which catalyzes electron transfer from NADH through the respiratory chain, using ubiquinone as an electron acceptor. Essential for the catalytic activity of complex I. The polypeptide is NADH-ubiquinone oxidoreductase chain 3 (Phoca vitulina (Harbor seal)).